Reading from the N-terminus, the 151-residue chain is Large ribosomal subunit protein bL9 (151 aa).

The protein belongs to the bacterial ribosomal protein bL9 family.

Its function is as follows. Binds to the 23S rRNA. The sequence is that of Large ribosomal subunit protein bL9 from Rhodococcus jostii (strain RHA1).